A 340-amino-acid chain; its full sequence is tRNA N6-adenosine threonylcarbamoyltransferase (340 aa).

2 residues coordinate Fe cation: histidine 111 and histidine 115. Residues 134–138, aspartate 167, glycine 180, and asparagine 276 each bind substrate; that span reads LVSGG. Aspartate 304 lines the Fe cation pocket.

It belongs to the KAE1 / TsaD family. Fe(2+) serves as cofactor.

It is found in the cytoplasm. It carries out the reaction L-threonylcarbamoyladenylate + adenosine(37) in tRNA = N(6)-L-threonylcarbamoyladenosine(37) in tRNA + AMP + H(+). Its function is as follows. Required for the formation of a threonylcarbamoyl group on adenosine at position 37 (t(6)A37) in tRNAs that read codons beginning with adenine. Is involved in the transfer of the threonylcarbamoyl moiety of threonylcarbamoyl-AMP (TC-AMP) to the N6 group of A37, together with TsaE and TsaB. TsaD likely plays a direct catalytic role in this reaction. The sequence is that of tRNA N6-adenosine threonylcarbamoyltransferase from Helicobacter pylori (strain G27).